We begin with the raw amino-acid sequence, 366 residues long: Photosynthetic reaction center cytochrome c subunit (366 aa).

The N-terminal stretch at 1–22 is a signal peptide; that stretch reads MALAVRISTLTVAVTAAALLAG. Cys23 is lipidated: N-palmitoyl cysteine. Residue Cys23 is the site of S-diacylglycerol cysteine attachment. Heme contacts are provided by Met94, Cys107, Cys110, His111, Met129, His143, Cys151, Cys154, His155, Met238, Cys249, Cys252, His253, Cys309, Cys312, and His313.

As to quaternary structure, component of the photosynthetic reaction center composed of protein subunits L (PufL), M (PufM), H (PuhA) and cytochrome C (PufC). The reaction center interacts with light-harvesting antenna complex LH1. Binds 4 heme groups per subunit.

It is found in the cellular chromatophore membrane. Functionally, the reaction center of purple bacteria contains a tightly bound cytochrome molecule which re-reduces the photo oxidized primary electron donor. The polypeptide is Photosynthetic reaction center cytochrome c subunit (pufC) (Rubrivivax gelatinosus (strain NBRC 100245 / IL144)).